A 217-amino-acid chain; its full sequence is Probable GTP-binding protein EngB (217 aa).

Positions aspartate 37–glutamate 214 constitute an EngB-type G domain. GTP-binding positions include glycine 45–serine 52, glycine 72–glutamate 76, aspartate 92–glycine 95, threonine 159–aspartate 162, and threonine 193–serine 195. Mg(2+) contacts are provided by serine 52 and threonine 74.

It belongs to the TRAFAC class TrmE-Era-EngA-EngB-Septin-like GTPase superfamily. EngB GTPase family. The cofactor is Mg(2+).

Necessary for normal cell division and for the maintenance of normal septation. The polypeptide is Probable GTP-binding protein EngB (Bradyrhizobium diazoefficiens (strain JCM 10833 / BCRC 13528 / IAM 13628 / NBRC 14792 / USDA 110)).